Consider the following 468-residue polypeptide: Chromosomal replication initiator protein DnaA (468 aa).

Residues Met-1–Ser-84 are domain I, interacts with DnaA modulators. Residues Ser-84–Ser-131 are domain II. The disordered stretch occupies residues Leu-112–Asn-132. Basic and acidic residues predominate over residues Lys-114–His-129. A domain III, AAA+ region region spans residues Asn-132 to Ala-348. Residues Gly-176, Gly-178, Lys-179, and Thr-180 each coordinate ATP. Positions Asn-349 to Ser-468 are domain IV, binds dsDNA.

The protein belongs to the DnaA family. As to quaternary structure, oligomerizes as a right-handed, spiral filament on DNA at oriC.

It localises to the cytoplasm. In terms of biological role, plays an essential role in the initiation and regulation of chromosomal replication. ATP-DnaA binds to the origin of replication (oriC) to initiate formation of the DNA replication initiation complex once per cell cycle. Binds the DnaA box (a 9 base pair repeat at the origin) and separates the double-stranded (ds)DNA. Forms a right-handed helical filament on oriC DNA; dsDNA binds to the exterior of the filament while single-stranded (ss)DNA is stabiized in the filament's interior. The ATP-DnaA-oriC complex binds and stabilizes one strand of the AT-rich DNA unwinding element (DUE), permitting loading of DNA polymerase. After initiation quickly degrades to an ADP-DnaA complex that is not apt for DNA replication. Binds acidic phospholipids. The chain is Chromosomal replication initiator protein DnaA from Aliivibrio salmonicida (strain LFI1238) (Vibrio salmonicida (strain LFI1238)).